Here is a 113-residue protein sequence, read N- to C-terminus: Large ribosomal subunit protein uL24 (113 aa).

The protein belongs to the universal ribosomal protein uL24 family. As to quaternary structure, part of the 50S ribosomal subunit.

In terms of biological role, one of two assembly initiator proteins, it binds directly to the 5'-end of the 23S rRNA, where it nucleates assembly of the 50S subunit. Its function is as follows. One of the proteins that surrounds the polypeptide exit tunnel on the outside of the subunit. This is Large ribosomal subunit protein uL24 from Rickettsia typhi (strain ATCC VR-144 / Wilmington).